The chain runs to 378 residues: Putative zinc finger protein C09F5.3 (378 aa).

The segment covering 1–14 (MRKTEKMKRPHNSS) has biased composition (basic residues). Disordered stretches follow at residues 1 to 36 (MRKT…SKSI) and 61 to 80 (TLSE…NSAP). 2 stretches are compositionally biased toward basic and acidic residues: residues 16–26 (VKQEERADDSH) and 62–71 (LSEHVPEKKP). A C2H2-type 1 zinc finger spans residues 42–65 (LKCELCSTVCSSISQLQSHTLSEH). Residues 85–107 (VACQQCEDTFEDFAQFAIHMKSH) form a C2H2-type 2; degenerate zinc finger. Residues 204–226 (YGCALCATSYPSQLHLITHVQMS) form a C2H2-type 3; degenerate zinc finger. Residues 231-250 (TFYPPSLPIPTPPSPKSTPK) form a disordered region. Residues 235 to 246 (PSLPIPTPPSPK) show a composition bias toward pro residues. 4 C2H2-type zinc fingers span residues 254 to 277 (LQCS…LRKH), 284 to 306 (DKCA…CLRH), 312 to 334 (HHCP…CAYH), and 355 to 377 (FVCP…TKIH).

The protein localises to the nucleus. This chain is Putative zinc finger protein C09F5.3, found in Caenorhabditis elegans.